The following is a 333-amino-acid chain: Antimicrobial peptides (333 aa).

The signal sequence occupies residues 1 to 23 (MVQKGVVFGVLLILFICSTLTSA). The interval 23–52 (ADSKPNPTKEEEPAKKPDEVSVKSGGPEVS) is disordered. Positions 24 to 54 (DSKPNPTKEEEPAKKPDEVSVKSGGPEVSED) are cleaved as a propeptide — acidic peptide 1. The segment covering 29-43 (PTKEEEPAKKPDEVS) has biased composition (basic and acidic residues). Glutamine 55 is subject to Pyrrolidone carboxylic acid. 2 cysteine pairs are disulfide-bonded: cysteine 60-cysteine 70 and cysteine 61-cysteine 74. Residues 75 to 102 (ANAEEAAAAIPEASEELAQEEAPVYSED) constitute a propeptide, acidic peptide 2. Glutamine 103 is subject to Pyrrolidone carboxylic acid. Disulfide bonds link cysteine 108-cysteine 118 and cysteine 109-cysteine 122. Residues 123–148 (QNAEEAAAAIPEATEKAQEAPVYSED) constitute a propeptide, acidic peptide 3. Glutamine 149 carries the pyrrolidone carboxylic acid modification. 2 cysteine pairs are disulfide-bonded: cysteine 154-cysteine 164 and cysteine 155-cysteine 168. A propeptide spans 169–196 (QNAEEAAAAVAIPEASEKAQEGPVYSED) (acidic peptide 4). The residue at position 197 (glutamine 197) is a Pyrrolidone carboxylic acid. 2 disulfide bridges follow: cysteine 202–cysteine 212 and cysteine 203–cysteine 216. A propeptide spans 217–232 (SNAADEVATPEDVEPG) (acidic peptide 5). Glutamine 233 is modified (pyrrolidone carboxylic acid). Intrachain disulfides connect cysteine 238–cysteine 248 and cysteine 239–cysteine 252. The propeptide at 253 to 278 (HNAAEEATLKAFEEEAAREQPVYSED) is acidic peptide 6. Residue glutamine 279 is modified to Pyrrolidone carboxylic acid. 2 disulfide bridges follow: cysteine 284–cysteine 294 and cysteine 285–cysteine 298. The propeptide at 299 to 333 (QSAEEAAAFQAGEVTASLMLIMFKACPCMGPVPSV) is acidic peptide 7.

Post-translationally, the N-terminal of all peptides are blocked. The 4 cysteine residues of all peptides are involved in intrachain disulfide bonds.

The protein resides in the secreted. In terms of biological role, plays a role in the defense of the germinating seed against microorganisms, by inhibiting the growth of a range of filamentous fungi and bacteria, especially Gram-positive bacteria. Not cytotoxic for cultured human cells and are the smallest known plant-derived antimicrobial peptides. Peptide IB-AMP4 has a higher antifungal activity than IB-AMP1. The protein is Antimicrobial peptides (AMP) of Impatiens balsamina (Balsam).